The following is a 277-amino-acid chain: Trypsin-2 (277 aa).

The N-terminal stretch at 1-19 (MSNKIAILLLAVVVAVVAC) is a signal peptide. A propeptide spans 20–50 (AQAQPSRRHHLVHPLLPRFLPRLHRDSNGHR) (activation peptide). In terms of domain architecture, Peptidase S1 spans 51–276 (VVGGFQIDVS…VRDWVRENSG (226 aa)). Residues C76 and C92 are joined by a disulfide bond. Catalysis depends on charge relay system residues H91 and D136. Cystine bridges form between C201–C217 and C228–C252. Catalysis depends on S232, which acts as the Charge relay system.

Belongs to the peptidase S1 family. Midgut.

The protein localises to the secreted. The catalysed reaction is Preferential cleavage: Arg-|-Xaa, Lys-|-Xaa.. Major function may be to aid in digestion of the blood meal. The chain is Trypsin-2 (TRYP2) from Anopheles gambiae (African malaria mosquito).